We begin with the raw amino-acid sequence, 135 residues long: ATP synthase epsilon chain (135 aa).

The segment at 84–107 is disordered; it reads SLSEEKQSEEQKQRLERAKKALSS. Positions 86-102 are enriched in basic and acidic residues; it reads SEEKQSEEQKQRLERAK.

The protein belongs to the ATPase epsilon chain family. As to quaternary structure, F-type ATPases have 2 components, CF(1) - the catalytic core - and CF(0) - the membrane proton channel. CF(1) has five subunits: alpha(3), beta(3), gamma(1), delta(1), epsilon(1). CF(0) has three main subunits: a, b and c.

It localises to the cell membrane. Functionally, produces ATP from ADP in the presence of a proton gradient across the membrane. The protein is ATP synthase epsilon chain of Elusimicrobium minutum (strain Pei191).